Consider the following 248-residue polypeptide: tRNA (guanine-N(1)-)-methyltransferase (248 aa).

S-adenosyl-L-methionine is bound by residues Gly-113 and 133–138 (VGDYVL).

This sequence belongs to the RNA methyltransferase TrmD family. As to quaternary structure, homodimer.

It is found in the cytoplasm. It carries out the reaction guanosine(37) in tRNA + S-adenosyl-L-methionine = N(1)-methylguanosine(37) in tRNA + S-adenosyl-L-homocysteine + H(+). In terms of biological role, specifically methylates guanosine-37 in various tRNAs. The chain is tRNA (guanine-N(1)-)-methyltransferase from Shewanella oneidensis (strain ATCC 700550 / JCM 31522 / CIP 106686 / LMG 19005 / NCIMB 14063 / MR-1).